Reading from the N-terminus, the 233-residue chain is Beta-fibrinogenase brevinase (233 aa).

The 224-residue stretch at V1–A224 folds into the Peptidase S1 domain. Disulfide bonds link C7–C138, C25–C41, C73–C231, C117–C185, C149–C164, and C175–C200. Residue H40 is the Charge relay system of the active site. An N-linked (GlcNAc...) asparagine glycan is attached at N54. The Charge relay system role is filled by D85. Residue N129 is glycosylated (N-linked (GlcNAc...) asparagine). The short motif at R176–D178 is the Cell attachment site element. Catalysis depends on S179, which acts as the Charge relay system. Residue N226 is glycosylated (N-linked (GlcNAc...) asparagine).

The protein belongs to the peptidase S1 family. Snake venom subfamily. Heterodimer of the brevinase A chain and the brevinase B chain. In terms of tissue distribution, expressed by the venom gland.

Its subcellular location is the secreted. With respect to regulation, the fibrinolytic activity is completely inhibited by PMSF, diisopropylfluorophosphate (DFP), pefabloc, dithiothreitol (DTT) and Zn(2+), but not by Pepstatin A, E64, iodoacetate, chymostatin, tosyl-Lphenylalanine chloromethyl ketone (TPCK), soybean trypsin inhibitor (SBTI), phosphoramidon, Ca(2+), Co(2+), Cu(2+), Fe(2+), Mg(2+), Mn(2+), K(+), and Na(+). Functionally, snake venom serine protease that has fibrinogenolytic activities. Preferentially cleaves the Bbeta-chain (FGB) and more slowly the Aa-chain (FGA) of fibrinogen, but does not affect the gamma-chain. Also has fibrinolytic activity. May play a role in antithrombotic reaction as well as thrombolytic reaction. In Gloydius blomhoffii (Mamushi), this protein is Beta-fibrinogenase brevinase.